The primary structure comprises 1067 residues: Ubiquitin conjugation factor E4 A (1067 aa).

Positions 33-57 are disordered; it reads KEQLKQQSDELPASPDDSDNSVSES. At Lys-386 the chain carries N6-acetyllysine. The U-box domain maps to 987–1061; that stretch reads DACDEFLDPI…QRWLAERKQQ (75 aa).

The protein belongs to the ubiquitin conjugation factor E4 family.

It localises to the cytoplasm. It catalyses the reaction S-ubiquitinyl-[E2 ubiquitin-conjugating enzyme]-L-cysteine + [acceptor protein]-L-lysine = [E2 ubiquitin-conjugating enzyme]-L-cysteine + N(6)-ubiquitinyl-[acceptor protein]-L-lysine.. The protein operates within protein modification; protein ubiquitination. Its function is as follows. Ubiquitin-protein ligase that probably functions as an E3 ligase in conjunction with specific E1 and E2 ligases. May also function as an E4 ligase mediating the assembly of polyubiquitin chains on substrates ubiquitinated by another E3 ubiquitin ligase. Mediates 'Lys-48'-linked polyubiquitination of substrates. The protein is Ubiquitin conjugation factor E4 A of Bos taurus (Bovine).